A 260-amino-acid chain; its full sequence is NH(3)-dependent NAD(+) synthetase (260 aa).

31–38 (GLSGGLDS) contacts ATP. Mg(2+) is bound at residue aspartate 37. Arginine 112 is a deamido-NAD(+) binding site. Residue threonine 132 participates in ATP binding. Glutamate 137 contributes to the Mg(2+) binding site. ATP is bound by residues lysine 161 and serine 183.

The protein belongs to the NAD synthetase family. Homodimer.

It catalyses the reaction deamido-NAD(+) + NH4(+) + ATP = AMP + diphosphate + NAD(+) + H(+). The protein operates within cofactor biosynthesis; NAD(+) biosynthesis; NAD(+) from deamido-NAD(+) (ammonia route): step 1/1. Its function is as follows. Catalyzes the ATP-dependent amidation of deamido-NAD to form NAD. Uses ammonia as a nitrogen source. The protein is NH(3)-dependent NAD(+) synthetase of Helicobacter acinonychis (strain Sheeba).